Reading from the N-terminus, the 615-residue chain is Isocitrate dehydrogenase kinase/phosphatase (615 aa).

ATP-binding positions include 328-334 (APGIRGL) and Lys-349. Residue Asp-384 is part of the active site. The segment at 595-615 (AEPPATPPVKQPDAGPARRVA) is disordered.

This sequence belongs to the AceK family.

It is found in the cytoplasm. It carries out the reaction L-seryl-[isocitrate dehydrogenase] + ATP = O-phospho-L-seryl-[isocitrate dehydrogenase] + ADP + H(+). Bifunctional enzyme which can phosphorylate or dephosphorylate isocitrate dehydrogenase (IDH) on a specific serine residue. This is a regulatory mechanism which enables bacteria to bypass the Krebs cycle via the glyoxylate shunt in response to the source of carbon. When bacteria are grown on glucose, IDH is fully active and unphosphorylated, but when grown on acetate or ethanol, the activity of IDH declines drastically concomitant with its phosphorylation. The polypeptide is Isocitrate dehydrogenase kinase/phosphatase (Cupriavidus taiwanensis (strain DSM 17343 / BCRC 17206 / CCUG 44338 / CIP 107171 / LMG 19424 / R1) (Ralstonia taiwanensis (strain LMG 19424))).